The primary structure comprises 1891 residues: TATA-binding protein-associated factor mot1 (1891 aa).

The HEAT 1 repeat unit spans residues 30–68; sequence PDELFNLLGRILPYLRSKSWDTRAAAAKAIGLIVANADT. 3 disordered regions span residues 184–216, 241–283, and 295–316; these read FVAS…LSKR, LSSR…LDRS, and FKGA…EGPN. Residues 264-275 show a composition bias toward basic and acidic residues; the sequence is ENGEERNGDSKP. HEAT repeat units lie at residues 473 to 511 and 569 to 606; these read SKLM…EFVK and SSFG…LEGE. Residues 699 to 710 are compositionally biased toward low complexity; that stretch reads SAAAPARSSPAS. The segment at 699-740 is disordered; that stretch reads SAAAPARSSPASNTPEGTKGRRRKSEKKEAPPPSAHNVDGHM. HEAT repeat units lie at residues 957 to 996, 1139 to 1177, 1181 to 1216, and 1219 to 1257; these read PKKP…YYTT, YPWV…VITV, TMLV…VMED, and LPYV…LVPL. The region spanning 1316–1489 is the Helicase ATP-binding domain; sequence AFLNRYNLHG…WSLFDFLMPG (174 aa). 1329-1336 contacts ATP; it reads DDMGLGKT. The short motif at 1440–1443 is the DEAH box element; sequence DEGH. An HEAT 8 repeat occupies 1526–1565; the sequence is EALHKQVLPFLLRRLKEEVLNDLPPKIIQNYYCDPSELQR. Positions 1663–1813 constitute a Helicase C-terminal domain; it reads DLSGASYVSP…STVVNQQNAG (151 aa).

It belongs to the SNF2/RAD54 helicase family. As to quaternary structure, forms the NCT transcriptional regulatory complex with nctA and nctB.

It is found in the nucleus. Its function is as follows. Regulates transcription in association with TATA binding protein (TBP). Removes TBP from the TATA box via its C-terminal ATPase activity. Both transcription activation and repression require its ATPase activity. Part of the NCT transcriptional regulatory complex that acts as a key regulator of ergosterol biosynthesis and the azole exporter cdr1B. The NCT complex binds the promoters of genes linked to azole susceptibility, and especially represses the expression of cdr1B transporter. This chain is TATA-binding protein-associated factor mot1, found in Aspergillus fumigatus (strain ATCC MYA-4609 / CBS 101355 / FGSC A1100 / Af293) (Neosartorya fumigata).